Here is a 187-residue protein sequence, read N- to C-terminus: F-box protein At5g41720 (187 aa).

One can recognise an F-box domain in the interval 2-49; sequence MMNSPLDYDVLLEIMSYCPATEMAKFRLLSKECNKRSYEMSFINRHLH.

This is F-box protein At5g41720 from Arabidopsis thaliana (Mouse-ear cress).